We begin with the raw amino-acid sequence, 175 residues long: S-fimbrial protein subunit SfaG (175 aa).

A signal peptide spans 1–27; it reads MVKDIIKTVTFSCMLAGSMFVTCHVCA. A disulfide bridge connects residues C43 and C83.

The protein belongs to the fimbrial protein family.

It localises to the fimbrium. In terms of biological role, fimbriae (also called pili), polar filaments radiating from the surface of the bacterium to a length of 0.5-1.5 micrometers and numbering 100-300 per cell, enable bacteria to colonize the epithelium of specific host organs. Its function is as follows. A minor fimbrial subunit. This protein is necessary for full expression of S-specific binding. S-fimbrial adhesins enable pathogenic E.coli causing urinary-tract infections or newborn meningitis to attach to glycoproteins terminating with alpha-sialic acid-(2-3)-beta-Gal. This Escherichia coli O6:K15:H31 (strain 536 / UPEC) protein is S-fimbrial protein subunit SfaG (sfaG).